We begin with the raw amino-acid sequence, 262 residues long: Snake venom serine proteinase 9 (262 aa).

A signal peptide spans 1–18 (MVLIRVLANLLILQLSYA). Positions 19–24 (QKSSEL) are excised as a propeptide. Positions 25 to 253 (VIGGDECNID…HLDWIQSIIA (229 aa)) constitute a Peptidase S1 domain. 5 cysteine pairs are disulfide-bonded: cysteine 31-cysteine 165, cysteine 52-cysteine 68, cysteine 144-cysteine 214, cysteine 176-cysteine 193, and cysteine 204-cysteine 229. Histidine 67 serves as the catalytic Charge relay system. Asparagine 105 carries an N-linked (GlcNAc...) asparagine glycan. Aspartate 112 serves as the catalytic Charge relay system. The Charge relay system role is filled by serine 208.

It belongs to the peptidase S1 family. Snake venom subfamily. In terms of assembly, monomer. Expressed by the venom gland.

The protein resides in the secreted. Snake venom serine protease that may act in the hemostasis system of the prey. In Crotalus adamanteus (Eastern diamondback rattlesnake), this protein is Snake venom serine proteinase 9.